The primary structure comprises 1278 residues: Cytoplasmic FMR1-interacting protein 2 (1278 aa).

The residue at position 1062 (K1062) is an N6-acetyllysine.

The protein belongs to the CYFIP family. As to quaternary structure, component of the WAVE1 complex composed of ABI2, CYFIP2, BRK1, NCKAP1 and WASF1/WAVE1. Interacts with FMR1, FXR1 and FXR2. Interacts with FMR1 isoform 6; the interaction occurs in a RNA-dependent manner. Interacts with RAC1 (activated form) which causes the complex to dissociate, releasing activated WASF1. The complex can also be activated by NCK1. Interacts with SHANK3; the interaction mediates the association of SHANK3 with the WAVE1 complex. Interacts with TMEM108 (via N-terminus); the interaction associates TMEM108 with the WAVE1 complex. In terms of tissue distribution, expressed in T-cells. Increased expression is observed in CD4(+) T-lymphocytes from patients with multiple sclerosis (at protein level).

The protein localises to the cytoplasm. Its subcellular location is the nucleus. It localises to the perinuclear region. The protein resides in the synapse. It is found in the synaptosome. In terms of biological role, involved in T-cell adhesion and p53/TP53-dependent induction of apoptosis. Does not bind RNA. As component of the WAVE1 complex, required for BDNF-NTRK2 endocytic trafficking and signaling from early endosomes. In Homo sapiens (Human), this protein is Cytoplasmic FMR1-interacting protein 2.